We begin with the raw amino-acid sequence, 284 residues long: MTASLSLGWPAPAKLNLFLHINAQRHDGYHELQTLFQFIEHCDYLDFKVLDTPKLKLHSNMSSAVADSDNLILKAAKSLQQRTDCQLGAEIWLDKRLPMGGGLGGGSSDAATTLVALNQLWETGLSLRELGEIGLKLGADVPVFINGFSAFAEGVGEKLQNVEPAEPWYLVLTPQVHVSTAEVFQDPDLPRNTPKLSLESLMNSPWQNDCQTLVAKRYPQVAKTLAWLLEYAPSRMTGTGACVFGQFEQEQEAKDVLAKLPASIQGFVAKGANISPLMLRLAQC.

The active site involves K14. Residue 98 to 108 (PMGGGLGGGSS) coordinates ATP. D140 is a catalytic residue.

The protein belongs to the GHMP kinase family. IspE subfamily.

The enzyme catalyses 4-CDP-2-C-methyl-D-erythritol + ATP = 4-CDP-2-C-methyl-D-erythritol 2-phosphate + ADP + H(+). It participates in isoprenoid biosynthesis; isopentenyl diphosphate biosynthesis via DXP pathway; isopentenyl diphosphate from 1-deoxy-D-xylulose 5-phosphate: step 3/6. Catalyzes the phosphorylation of the position 2 hydroxy group of 4-diphosphocytidyl-2C-methyl-D-erythritol. The chain is 4-diphosphocytidyl-2-C-methyl-D-erythritol kinase from Shewanella pealeana (strain ATCC 700345 / ANG-SQ1).